A 749-amino-acid polypeptide reads, in one-letter code: G-type lectin S-receptor-like serine/threonine-protein kinase At1g61460 (749 aa).

The signal sequence occupies residues 1–25; the sequence is MRITFFASLLLFTNTIFISFSFAIA. The region spanning 26 to 145 is the Bulb-type lectin domain; it reads GINKESPLSI…FSGRTLWQSF (120 aa). Residues 26–392 lie on the Extracellular side of the membrane; sequence GINKESPLSI…ELGGNKRKKT (367 aa). 4 N-linked (GlcNAc...) asparagine glycosylation sites follow: asparagine 54, asparagine 95, asparagine 118, and asparagine 135. In terms of domain architecture, EGF-like; atypical spans 247–280; the sequence is PAHSCDYYGVCGPFGICVKSVCKCFKGFIPKYIE. Cystine bridges form between cysteine 251–cysteine 263 and cysteine 257–cysteine 268. N-linked (GlcNAc...) asparagine glycans are attached at residues asparagine 286, asparagine 302, and asparagine 341. One can recognise a PAN domain in the interval 299–381; that stretch reads CQENSTKKDA…GEILSIRLAR (83 aa). Intrachain disulfides connect cysteine 334–cysteine 355 and cysteine 338–cysteine 344. Residues 393–413 form a helical membrane-spanning segment; it reads ITASIVSLSLFLILGSTAFGF. Topologically, residues 414–749 are cytoplasmic; that stretch reads WRYRVKHNAS…EMTKSVILGR (336 aa). The Protein kinase domain occupies 454–721; sequence FSLSNKLGQG…DLPSPKQPTF (268 aa). ATP-binding positions include 460–468 and lysine 482; that span reads LGQGGFGSV. Residues 543–560 are caM-binding; the sequence is RKRLEIDWPKRFDIIQGI. The active-site Proton acceptor is the aspartate 579.

The protein belongs to the protein kinase superfamily. Ser/Thr protein kinase family.

Its subcellular location is the cell membrane. It catalyses the reaction L-seryl-[protein] + ATP = O-phospho-L-seryl-[protein] + ADP + H(+). It carries out the reaction L-threonyl-[protein] + ATP = O-phospho-L-threonyl-[protein] + ADP + H(+). This Arabidopsis thaliana (Mouse-ear cress) protein is G-type lectin S-receptor-like serine/threonine-protein kinase At1g61460.